Reading from the N-terminus, the 160-residue chain is Ribosomal RNA large subunit methyltransferase H (160 aa).

Residues leucine 76, glycine 108, and 127 to 132 (LGKMTW) each bind S-adenosyl-L-methionine.

This sequence belongs to the RNA methyltransferase RlmH family. As to quaternary structure, homodimer.

Its subcellular location is the cytoplasm. It carries out the reaction pseudouridine(1915) in 23S rRNA + S-adenosyl-L-methionine = N(3)-methylpseudouridine(1915) in 23S rRNA + S-adenosyl-L-homocysteine + H(+). Its function is as follows. Specifically methylates the pseudouridine at position 1915 (m3Psi1915) in 23S rRNA. In Sinorhizobium medicae (strain WSM419) (Ensifer medicae), this protein is Ribosomal RNA large subunit methyltransferase H.